The sequence spans 435 residues: Xylose isomerase (435 aa).

Residues histidine 100 and aspartate 103 contribute to the active site. Mg(2+)-binding residues include glutamate 231, glutamate 267, histidine 270, aspartate 295, aspartate 306, aspartate 308, and aspartate 338.

It belongs to the xylose isomerase family. Homotetramer. Mg(2+) serves as cofactor.

Its subcellular location is the cytoplasm. It carries out the reaction alpha-D-xylose = alpha-D-xylulofuranose. In Brucella canis (strain ATCC 23365 / NCTC 10854 / RM-666), this protein is Xylose isomerase.